Here is a 123-residue protein sequence, read N- to C-terminus: Small ribosomal subunit protein uS12 (123 aa).

Residue Asp-89 is modified to 3-methylthioaspartic acid.

It belongs to the universal ribosomal protein uS12 family. Part of the 30S ribosomal subunit. Contacts proteins S8 and S17. May interact with IF1 in the 30S initiation complex.

In terms of biological role, with S4 and S5 plays an important role in translational accuracy. Interacts with and stabilizes bases of the 16S rRNA that are involved in tRNA selection in the A site and with the mRNA backbone. Located at the interface of the 30S and 50S subunits, it traverses the body of the 30S subunit contacting proteins on the other side and probably holding the rRNA structure together. The combined cluster of proteins S8, S12 and S17 appears to hold together the shoulder and platform of the 30S subunit. The polypeptide is Small ribosomal subunit protein uS12 (Rhodopseudomonas palustris (strain BisB18)).